The primary structure comprises 122 residues: Large ribosomal subunit protein uL14 (122 aa).

Belongs to the universal ribosomal protein uL14 family. In terms of assembly, part of the 50S ribosomal subunit. Forms a cluster with proteins L3 and L19. In the 70S ribosome, L14 and L19 interact and together make contacts with the 16S rRNA in bridges B5 and B8.

In terms of biological role, binds to 23S rRNA. Forms part of two intersubunit bridges in the 70S ribosome. This Marinomonas sp. (strain MWYL1) protein is Large ribosomal subunit protein uL14.